The primary structure comprises 409 residues: Putative competence-damage inducible protein (409 aa).

This sequence belongs to the CinA family.

This chain is Putative competence-damage inducible protein, found in Clostridium botulinum (strain Langeland / NCTC 10281 / Type F).